The primary structure comprises 490 residues: Betaine aldehyde dehydrogenase (490 aa).

N93 provides a ligand contact to K(+). 150 to 152 provides a ligand contact to NAD(+); that stretch reads GAW. K162 functions as the Charge relay system in the catalytic mechanism. 176-179 contacts NAD(+); that stretch reads KPSE. A K(+)-binding site is contributed by V180. Residue 230–233 coordinates NAD(+); that stretch reads GTAT. Residue L246 participates in K(+) binding. E252 (proton acceptor) is an active-site residue. Residues G254, C286, and E387 each coordinate NAD(+). C286 functions as the Nucleophile in the catalytic mechanism. C286 is subject to Cysteine sulfenic acid (-SOH). K457 and G460 together coordinate K(+). The active-site Charge relay system is E464.

Belongs to the aldehyde dehydrogenase family. As to quaternary structure, dimer of dimers. Requires K(+) as cofactor.

The enzyme catalyses betaine aldehyde + NAD(+) + H2O = glycine betaine + NADH + 2 H(+). It participates in amine and polyamine biosynthesis; betaine biosynthesis via choline pathway; betaine from betaine aldehyde: step 1/1. In terms of biological role, involved in the biosynthesis of the osmoprotectant glycine betaine. Catalyzes the irreversible oxidation of betaine aldehyde to the corresponding acid. The chain is Betaine aldehyde dehydrogenase from Xanthomonas euvesicatoria pv. vesicatoria (strain 85-10) (Xanthomonas campestris pv. vesicatoria).